A 73-amino-acid chain; its full sequence is UPF0352 protein APJL_0577 (73 aa).

This sequence belongs to the UPF0352 family.

This chain is UPF0352 protein APJL_0577, found in Actinobacillus pleuropneumoniae serotype 3 (strain JL03).